The sequence spans 1169 residues: Chromosome partition protein Smc (1169 aa).

Residue 32–39 (PNGCGKSN) participates in ATP binding. Coiled coils occupy residues 170–507 (ISKY…ALGE) and 659–1030 (REQQ…FQSL).

Belongs to the SMC family. As to quaternary structure, homodimer.

The protein resides in the cytoplasm. Required for chromosome condensation and partitioning. In Coxiella burnetii (strain RSA 493 / Nine Mile phase I), this protein is Chromosome partition protein Smc.